Consider the following 466-residue polypeptide: cAMP-dependent protein kinase regulatory subunit (466 aa).

The tract at residues 25 to 231 is dimerization and phosphorylation; the sequence is QFAANYFTKR…RLEKAVGKNF (207 aa). The segment covering 71–80 has biased composition (low complexity); that stretch reads ASLSHGSSKA. 4 disordered regions span residues 71 to 90, 109 to 139, 154 to 179, and 193 to 218; these read ASLS…ISSS, STHI…PGIF, NSSV…VVNP, and SVSG…KSPE. Residues 81-90 are compositionally biased toward polar residues; sequence NASQSGISSS. The span at 109 to 118 shows a compositional bias: basic and acidic residues; the sequence is STHIVDHLDS. Residue Ser193 is modified to Phosphoserine. Residues 200-218 are compositionally biased toward basic and acidic residues; the sequence is QPDHLDDWKPENFQEKSPE. 3',5'-cyclic AMP-binding positions include 232–347, Glu297, Arg306, 350–466, Glu416, and Arg425; these read LFNK…LLKN and ILKS…RSKH.

This sequence belongs to the cAMP-dependent kinase regulatory chain family. In terms of assembly, tetramer, composed of 2 regulatory (R) and 2 catalytic (C) subunits. In the presence of cAMP it dissociates into 2 active monomeric C subunits and an R dimer.

This chain is cAMP-dependent protein kinase regulatory subunit (PKAR), found in Kluyveromyces lactis (strain ATCC 8585 / CBS 2359 / DSM 70799 / NBRC 1267 / NRRL Y-1140 / WM37) (Yeast).